The following is a 148-amino-acid chain: Fluoride-specific ion channel FluC 2 (148 aa).

The next 4 helical transmembrane spans lie at 23 to 43, 61 to 81, 92 to 112, and 120 to 140; these read LGHLGWIFAGGALGAAARLAV, GTLAANAAGSFLIAIFGTLIF, FWVLGFLGSLTTFSSYALHTL, and LLGGLYGGGSLLLGLLAALAG. Na(+) is bound by residues glycine 99 and threonine 102.

Belongs to the fluoride channel Fluc/FEX (TC 1.A.43) family.

Its subcellular location is the cell membrane. The catalysed reaction is fluoride(in) = fluoride(out). Na(+) is not transported, but it plays an essential structural role and its presence is essential for fluoride channel function. Its function is as follows. Fluoride-specific ion channel. Important for reducing fluoride concentration in the cell, thus reducing its toxicity. In Rubrobacter xylanophilus (strain DSM 9941 / JCM 11954 / NBRC 16129 / PRD-1), this protein is Fluoride-specific ion channel FluC 2.